The primary structure comprises 548 residues: MAEQQTTELTNIDLEAGSEWRFELEADENIALRTLSSDPVFINSQELTPSAWYPIYRHTKSALYAPTSARIQVTNLPASHYTSTSTVQPQLLNLHLAMERQRILSKRGMEQRGPRVMIMGPQSSGKTTVMKNLVNLALGTGMGWTPGAIGLDPSSPPNLIPGSLSISTPSHPIPTHHLAHPLGSPPASTAANTISGDVETASWWLGALEPTNKNAEVWRVLVEHMAEAWGMRCEKDKIANISGLFLDTPAAFTVPTLGTKKDDPKARYTLVSHAIQAFDIDTIIVIGHEKLHIDLSRLPLVQSRQLNVIRIPKSGGAVDLDDHDRETAHIFQVRTYFYGEPPLPPQISSLVGKMVSLDFELSPYSFQIPWSRLVVLRVGEENSAPSSALPLGSSKILSPLRLTRVDPSGPGHVVRLLNRVLALVDVKPEDRIVPAKESEVKEEVKEEKNEKDGEIKQDGEGEKKGEGKGEGEGEGEGKDGEEEGEAEGEDDEEEVPFREEIGTREVMGFIVITAIDTFARKYTVLSPTPGRLPTTVAIAGAIEWVDSA.

ATP contacts are provided by residues Glu-19, Lys-60, and 123–128 (SSGKTT). The span at 437–478 (ESEVKEEVKEEKNEKDGEIKQDGEGEKKGEGKGEGEGEGEGK) shows a compositional bias: basic and acidic residues. The interval 437 to 500 (ESEVKEEVKE…DEEEVPFREE (64 aa)) is disordered. The segment covering 479–494 (DGEEEGEAEGEDDEEE) has biased composition (acidic residues).

The protein belongs to the Clp1 family. Clp1 subfamily. Component of a pre-mRNA cleavage factor complex. Interacts directly with PCF11.

It localises to the nucleus. Functionally, required for endonucleolytic cleavage during polyadenylation-dependent pre-mRNA 3'-end formation. The chain is mRNA cleavage and polyadenylation factor CLP1 from Cryptococcus neoformans var. neoformans serotype D (strain JEC21 / ATCC MYA-565) (Filobasidiella neoformans).